The following is a 499-amino-acid chain: MATSKAPKERLKNYKYRGKEMSLPRQQRIASSLQLRKTRKDEQVLKRRNIDLFSSDMVSQALVKEVNFTLDDIIQAVNSSDPILHFRATRAAREMISQENTPPLNLIIEAGLIPKLVDFLKATPHPKLQFEAAWVLTNIASGTSEQTRAVVKEGAIQPLIELLCSPHLTVSEQAVWALGNIAGDCAEFRDCVISNNAIPHLINLISKGIPITFLRNISWTLSNLCRNKDPYPSESAVRQMLPPLCQLLLHRDNEILADTCWALSYLTKGGKEYIHHVVTTGILPRLVELMTSSELSISIPCLHTIGNIVAGTDEQTQMAIDAGMLKVLGQVLKHPKTSIQVLAAWTMSNVAAGPRHQVEQLLCNLLPILVDLLRNAELKVQKEVVCTVINIATGASQDQLTLLAHSGILEPMLSLLSAPDLEVVIIVLDIISYLLQHIDNLQEKKRLYFQIEKFGGFEKIECLQHHHNISISNSALDIIEKYFCEDGDGDSLPGPGLRV.

The region spanning Met-1–Met-57 is the IBB domain. 8 ARM repeats span residues Thr-101–Ser-141, Ser-144–Gly-183, Ala-186–Arg-226, Asp-229–Lys-268, Lys-271–Ala-310, Asp-313–Ala-352, Pro-354–Thr-393, and Gln-397–Gln-436.

Belongs to the importin alpha family. Binds to importin subunit beta-1/KPNB1 via the IBB domain; this complex dissociates in the presence of RAN-GTP. Shows a limited binding to the RB1 nuclear localization signal (NLS), but not to the SV40, nor NPM1 NLSs. Interacts with RSL1D1. Expressed predominantly in ovary. Isoform 1 is the predominant form.

It localises to the nucleus. Functions in nuclear protein import. This is Importin subunit alpha-8 (Kpna7) from Mus musculus (Mouse).